Consider the following 73-residue polypeptide: Mitofissin (73 aa).

The protein belongs to the ?ATG44? family. Homooligomer. Found as homooctamer in solution, but binds to membranes either as a monomer, dimer, or tetramer, not as an octamer.

The protein localises to the mitochondrion intermembrane space. Its subcellular location is the vacuole. Mitochondrial fission factor that acts directly on lipid membranes to drive mitochondrial fission required for mitophagy. Directly binds to lipid membranes and brings about lipid membrane fragility to facilitate membrane fission and engulfment of mitochondria by the phagophore. The protein is Mitofissin of Saccharomyces cerevisiae (strain ATCC 204508 / S288c) (Baker's yeast).